The sequence spans 451 residues: Bifunctional protein GlmU (451 aa).

The pyrophosphorylase stretch occupies residues 1–229 (MQRNAVILAA…FNEIMGVNDR (229 aa)). UDP-N-acetyl-alpha-D-glucosamine-binding positions include 8–11 (LAAG), K22, Q72, and 77–78 (GT). D102 is a binding site for Mg(2+). UDP-N-acetyl-alpha-D-glucosamine is bound by residues G139, E154, and N227. N227 is a binding site for Mg(2+). Residues 230–250 (VMLSNAEKALQQRINIEHMRN) are linker. The interval 251–451 (GVTIIDPTTT…QITKEGYLKK (201 aa)) is N-acetyltransferase. UDP-N-acetyl-alpha-D-glucosamine contacts are provided by R332 and K350. H362 (proton acceptor) is an active-site residue. Residues Y365 and N376 each coordinate UDP-N-acetyl-alpha-D-glucosamine. Acetyl-CoA is bound by residues 385–386 (NY), A422, and R439.

The protein in the N-terminal section; belongs to the N-acetylglucosamine-1-phosphate uridyltransferase family. This sequence in the C-terminal section; belongs to the transferase hexapeptide repeat family. As to quaternary structure, homotrimer. The cofactor is Mg(2+).

The protein resides in the cytoplasm. It catalyses the reaction alpha-D-glucosamine 1-phosphate + acetyl-CoA = N-acetyl-alpha-D-glucosamine 1-phosphate + CoA + H(+). The enzyme catalyses N-acetyl-alpha-D-glucosamine 1-phosphate + UTP + H(+) = UDP-N-acetyl-alpha-D-glucosamine + diphosphate. It functions in the pathway nucleotide-sugar biosynthesis; UDP-N-acetyl-alpha-D-glucosamine biosynthesis; N-acetyl-alpha-D-glucosamine 1-phosphate from alpha-D-glucosamine 6-phosphate (route II): step 2/2. Its pathway is nucleotide-sugar biosynthesis; UDP-N-acetyl-alpha-D-glucosamine biosynthesis; UDP-N-acetyl-alpha-D-glucosamine from N-acetyl-alpha-D-glucosamine 1-phosphate: step 1/1. It participates in bacterial outer membrane biogenesis; LPS lipid A biosynthesis. Its function is as follows. Catalyzes the last two sequential reactions in the de novo biosynthetic pathway for UDP-N-acetylglucosamine (UDP-GlcNAc). The C-terminal domain catalyzes the transfer of acetyl group from acetyl coenzyme A to glucosamine-1-phosphate (GlcN-1-P) to produce N-acetylglucosamine-1-phosphate (GlcNAc-1-P), which is converted into UDP-GlcNAc by the transfer of uridine 5-monophosphate (from uridine 5-triphosphate), a reaction catalyzed by the N-terminal domain. The chain is Bifunctional protein GlmU from Staphylococcus haemolyticus (strain JCSC1435).